The sequence spans 212 residues: Ribonuclease HII (212 aa).

In terms of domain architecture, RNase H type-2 spans 17-211 (ANLAGIDEAG…VIEALLSLEQ (195 aa)). Residues Asp-23, Glu-24, and Asp-120 each contribute to the a divalent metal cation site.

It belongs to the RNase HII family. The cofactor is Mn(2+). It depends on Mg(2+) as a cofactor.

It is found in the cytoplasm. It carries out the reaction Endonucleolytic cleavage to 5'-phosphomonoester.. In terms of biological role, endonuclease that specifically degrades the RNA of RNA-DNA hybrids. This is Ribonuclease HII from Chloroflexus aurantiacus (strain ATCC 29364 / DSM 637 / Y-400-fl).